A 306-amino-acid chain; its full sequence is tRNA dimethylallyltransferase 2 (306 aa).

11–18 (GPTASGKT) is a binding site for ATP. A substrate-binding site is contributed by 13–18 (TASGKT). Residues 36–39 (DSRQ) are interaction with substrate tRNA.

This sequence belongs to the IPP transferase family. In terms of assembly, monomer. The cofactor is Mg(2+).

It carries out the reaction adenosine(37) in tRNA + dimethylallyl diphosphate = N(6)-dimethylallyladenosine(37) in tRNA + diphosphate. Its function is as follows. Catalyzes the transfer of a dimethylallyl group onto the adenine at position 37 in tRNAs that read codons beginning with uridine, leading to the formation of N6-(dimethylallyl)adenosine (i(6)A). This Bacteroides thetaiotaomicron (strain ATCC 29148 / DSM 2079 / JCM 5827 / CCUG 10774 / NCTC 10582 / VPI-5482 / E50) protein is tRNA dimethylallyltransferase 2.